Reading from the N-terminus, the 141-residue chain is uncharacterized protein (141 aa).

Belongs to the mimivirus L163/R849 family.

This is an uncharacterized protein from Acanthamoeba polyphaga mimivirus (APMV).